The chain runs to 364 residues: DNA replication and repair protein RecF (364 aa).

Position 30–37 (30–37 (GENGSGKT)) interacts with ATP.

The protein belongs to the RecF family.

The protein localises to the cytoplasm. Its function is as follows. The RecF protein is involved in DNA metabolism; it is required for DNA replication and normal SOS inducibility. RecF binds preferentially to single-stranded, linear DNA. It also seems to bind ATP. The polypeptide is DNA replication and repair protein RecF (Pseudoalteromonas translucida (strain TAC 125)).